The sequence spans 380 residues: tRNA-specific 2-thiouridylase MnmA (380 aa).

ATP is bound by residues 26-33 and Leu52; that span reads AMSGGVDS. The active-site Nucleophile is the Cys120. Cysteines 120 and 217 form a disulfide. An ATP-binding site is contributed by Gly144. The interval 166 to 168 is interaction with tRNA; the sequence is RDQ. Catalysis depends on Cys217, which acts as the Cysteine persulfide intermediate.

It belongs to the MnmA/TRMU family.

The protein resides in the cytoplasm. It carries out the reaction S-sulfanyl-L-cysteinyl-[protein] + uridine(34) in tRNA + AH2 + ATP = 2-thiouridine(34) in tRNA + L-cysteinyl-[protein] + A + AMP + diphosphate + H(+). Catalyzes the 2-thiolation of uridine at the wobble position (U34) of tRNA, leading to the formation of s(2)U34. In Jannaschia sp. (strain CCS1), this protein is tRNA-specific 2-thiouridylase MnmA.